Reading from the N-terminus, the 637-residue chain is Acetolactate synthase 2, chloroplastic (637 aa).

The transit peptide at 1–73 (MASFSFFGTI…SSKYAPNVPR (73 aa)) directs the protein to the chloroplast. Residues 35-69 (RRATRVSVSANSKKDQDRTASRRENPSTFSSKYAP) form a disordered region. A compositionally biased stretch (basic and acidic residues) spans 46–59 (SKKDQDRTASRREN). Glu-120 serves as a coordination point for thiamine diphosphate. Residues Arg-222, 329–350 (HGTV…FGVR), and 372–391 (DIDS…VCCD) each bind FAD. A thiamine pyrophosphate binding region spans residues 462-542 (QHQMWAAQFY…VKVLLINNQH (81 aa)). Mg(2+) is bound by residues Asp-513 and Asn-540.

The protein belongs to the TPP enzyme family. It depends on Mg(2+) as a cofactor. Thiamine diphosphate is required as a cofactor.

The protein resides in the plastid. It localises to the chloroplast. It catalyses the reaction 2 pyruvate + H(+) = (2S)-2-acetolactate + CO2. It participates in amino-acid biosynthesis; L-isoleucine biosynthesis; L-isoleucine from 2-oxobutanoate: step 1/4. It functions in the pathway amino-acid biosynthesis; L-valine biosynthesis; L-valine from pyruvate: step 1/4. The chain is Acetolactate synthase 2, chloroplastic from Brassica napus (Rape).